Here is a 415-residue protein sequence, read N- to C-terminus: Tyrosine--tRNA ligase (415 aa).

The 'HIGH' region motif lies at 54-63 (PTGSNIHLGH). The 'KMSKS' region motif lies at 248–252 (KMSKS). Lys-251 is an ATP binding site. The region spanning 351–414 (AKAFYLFSAV…LGKKTFRRLV (64 aa)) is the S4 RNA-binding domain.

Belongs to the class-I aminoacyl-tRNA synthetase family. TyrS type 2 subfamily. As to quaternary structure, homodimer.

It is found in the cytoplasm. It carries out the reaction tRNA(Tyr) + L-tyrosine + ATP = L-tyrosyl-tRNA(Tyr) + AMP + diphosphate + H(+). Functionally, catalyzes the attachment of tyrosine to tRNA(Tyr) in a two-step reaction: tyrosine is first activated by ATP to form Tyr-AMP and then transferred to the acceptor end of tRNA(Tyr). This is Tyrosine--tRNA ligase from Synechococcus sp. (strain CC9605).